The sequence spans 534 residues: Serine protease vicPb (534 aa).

A signal peptide spans 1 to 17 (MLRYLLIPILYLQVVLG). N34, N65, and N126 each carry an N-linked (GlcNAc...) asparagine glycan. S174 functions as the Charge relay system in the catalytic mechanism. N297, N335, N352, N415, and N437 each carry an N-linked (GlcNAc...) asparagine glycan. D451 functions as the Charge relay system in the catalytic mechanism.

Belongs to the peptidase S28 family.

It functions in the pathway mycotoxin biosynthesis. Functionally, serine protease, part of the gene cluster that mediates the biosynthesis of the secondary metabolite victorin, the molecular basis for Victoria blight of oats. Within the pathway, vicPa and vicPb are probably involved in the processing of the vicA1 and vicA2 precursors. The pathway starts with the processing of the precursor vicA1 by several endopeptidases including kexin proteases as well as the cluster-specific S28 family peptidases vicPa and vicPb to produce 7 identical copies of the hexapeptide Gly-Leu-Lys-Leu-Ala-Phe. After being excised from the precursor peptide, the core peptides are cyclized and modified post-translationally by enzymes encoded within the gene cluster. The ustYa family oxidase vicYb is required for the formation of the macrocycle in victorin and the copper amine oxidases (CAOs) vicK1 and vicK2 are responsible for converting victorin to the active form by oxidizing the N-terminal glycyl residue in the peptides to glyoxylate. Relaxed substrate specificity of enzymes in the victorin biosynthetic pathway results in a metabolic grid that produces a set of analogs including victorinines B, C, E or HV-toxin M. The chain is Serine protease vicPb from Bipolaris victoriae (strain FI3) (Victoria blight of oats agent).